The following is a 2060-amino-acid chain: Fatty acid synthase subunit beta (2060 aa).

The tract at residues 1–32 is disordered; sequence MFPGDMESKASSMNGDQPSSPTPSSSTSVTIP. Residues 18–32 are compositionally biased toward low complexity; that stretch reads PSSPTPSSSTSVTIP. The interval 182 to 543 is acetyltransferase (AT) domain; it reads VYVIFGGQGN…KAGQGVRVIH (362 aa). Ser301 acts as the For acetyltransferase activity in catalysis. The tract at residues 600-845 is enoyl reductase (ER) domain; that stretch reads TRLFLQPPIM…LIVATEGAPD (246 aa). A dehydratase (DH) domain region spans residues 1157-1640; it reads DKNLNWAKAL…CTGDRLAVSM (484 aa). Residues 1549–1661 form the MaoC-like domain; it reads FEEQEISFTA…VEVQIHKNMA (113 aa). The tract at residues 1679–2043 is malonyl/palmitoyl transferase (MT/PT) domain; that stretch reads LVFTGQGSQK…FNEVLRLTGS (365 aa). The For malonyltransferase activity role is filled by Ser1824.

This sequence belongs to the fungal fatty acid synthetase subunit beta family. In terms of assembly, [Alpha(6)beta(6)] hexamers of two multifunctional subunits (alpha and beta).

It carries out the reaction acetyl-CoA + n malonyl-CoA + 2n NADPH + 4n H(+) = a long-chain-acyl-CoA + n CoA + n CO2 + 2n NADP(+).. It catalyses the reaction holo-[ACP] + acetyl-CoA = acetyl-[ACP] + CoA. The enzyme catalyses holo-[ACP] + malonyl-CoA = malonyl-[ACP] + CoA. The catalysed reaction is a (3R)-hydroxyacyl-[ACP] = a (2E)-enoyl-[ACP] + H2O. It carries out the reaction a 2,3-saturated acyl-[ACP] + NAD(+) = a (2E)-enoyl-[ACP] + NADH + H(+). It catalyses the reaction (9Z)-octadecenoyl-[ACP] + H2O = (9Z)-octadecenoate + holo-[ACP] + H(+). It participates in mycotoxin biosynthesis. Its function is as follows. Fatty acid synthase subunit beta; part of the gene cluster that mediates the biosynthesis of gramillins A and B, bicyclic lipopeptides that induce cell death in maize leaves but not in wheat leaves. The nonribosomal peptide synthetase GRA1 incorporates respectively a glutamic adic (Glu), a leucine (Leu), a serine (Ser), a hydroxyglutamine (HOGln), a 2-amino decanoic acid, and 2 cysteins (CysB and CysA). The biosynthesis of 2-amino decanoic acid incorporated in gramillins could be initiated by a fatty acid synthase composed of the alpha and beta subunits FGSG_00036 and FGSG_11656. The cytochrome P450 monooxygenase FGSG_15680 could hydroxylate the fatty acid chain. Subsequent oxidation to the ketone by the oxidoreductase FGSG_00048 and transamination by aminotransferase FGSG_00049 could form 2-amino-decanoic acid. On the other hand, FGSG_15680 could also be responsible for the HO-modified glutamine at the gamma-position. Whether hydroxylation occurs on the fully assembled product or on the Gln residue prior to assembly into the gramillins requires further proof. The thioredoxin FGSG_00043 could also be required for the disulfide-bond formation between CysA and CysB. The specific involvement of the remaining proteins from the cluster is more difficult to discern, but could have broader regulatory (FGSG_00040 and FGSG_11657) or enzymatic functions (FGSG_00044 and FGSG_00045). The final C-domain of GRA1 does not possess the expected sequence of a termination CT domain, often implicated in macrocyclization and release of a cyclopeptidein fungal NRPs; and the thioesterase FGSG_00047 may act in concert with the terminal C-domain of GRA1 to catalyze the formation of the macrocyclic anhydride and release of the products. This chain is Fatty acid synthase subunit beta, found in Gibberella zeae (strain ATCC MYA-4620 / CBS 123657 / FGSC 9075 / NRRL 31084 / PH-1) (Wheat head blight fungus).